The following is a 560-amino-acid chain: Probable sulfate transporter MT1781 (560 aa).

Helical transmembrane passes span 29–49 (VLAGLTVAAYLIPQAMAYATV), 51–71 (GLPPAAGLWASIAPLAIYALL), 79–99 (IGPESATALMTAAVLAPMAAG), 105–125 (AVLAATLGLLVGLICLLAGTA), 138–158 (VLVGYMAGIALVMISSQLGTI), 184–204 (WPTFVLAMSVLALLTMLTRWA), 207–227 (APGPIIAVLAATMLVAVMSLD), 256–276 (ALIIPAAGIAIVTFTDGVLTA), 333–353 (LIALGLVVIVMVFASGLLAMF), 355–375 (IAALGALVVYAALRLIDLSEF), and 394–414 (AAVLGLGVFYGVLAAVALSIL). The STAS domain occupies 442–557 (DYPQAKRVPG…MTLPTAVQAF (116 aa)).

The protein belongs to the SLC26A/SulP transporter (TC 2.A.53) family.

It localises to the cell membrane. In Mycobacterium tuberculosis (strain CDC 1551 / Oshkosh), this protein is Probable sulfate transporter MT1781.